Here is a 388-residue protein sequence, read N- to C-terminus: Protein-glutamate methylesterase/protein-glutamine glutaminase 1 (388 aa).

Residues 4-121 enclose the Response regulatory domain; it reads QVLVVDDSSF…ATNKDEAIRL (118 aa). 4-aspartylphosphate is present on Asp-55. A disordered region spans residues 149–190; sequence SARAGLSSTSPTLGSSTLGRSPASGLASSASRNSPTVSTPAS. Over residues 153–169 the composition is skewed to low complexity; sequence GLSSTSPTLGSSTLGRS. The segment covering 174–189 has biased composition (polar residues); sequence LASSASRNSPTVSTPA. Residues 188-388 enclose the CheB-type methylesterase domain; it reads PASAIRASGK…EAILKESGRG (201 aa). Active-site residues include Ser-207, His-234, and Asp-330.

Belongs to the CheB family. Phosphorylated by CheA. Phosphorylation of the N-terminal regulatory domain activates the methylesterase activity.

Its subcellular location is the cytoplasm. The enzyme catalyses [protein]-L-glutamate 5-O-methyl ester + H2O = L-glutamyl-[protein] + methanol + H(+). It catalyses the reaction L-glutaminyl-[protein] + H2O = L-glutamyl-[protein] + NH4(+). Functionally, involved in chemotaxis. Part of a chemotaxis signal transduction system that modulates chemotaxis in response to various stimuli. Catalyzes the demethylation of specific methylglutamate residues introduced into the chemoreceptors (methyl-accepting chemotaxis proteins or MCP) by CheR. Also mediates the irreversible deamidation of specific glutamine residues to glutamic acid. In Shewanella denitrificans (strain OS217 / ATCC BAA-1090 / DSM 15013), this protein is Protein-glutamate methylesterase/protein-glutamine glutaminase 1.